Consider the following 517-residue polypeptide: Putative thymidine phosphorylase (517 aa).

This sequence belongs to the thymidine/pyrimidine-nucleoside phosphorylase family. Type 2 subfamily.

The catalysed reaction is thymidine + phosphate = 2-deoxy-alpha-D-ribose 1-phosphate + thymine. The chain is Putative thymidine phosphorylase from Legionella pneumophila (strain Paris).